Reading from the N-terminus, the 34-residue chain is MSDIN-like toxin proprotein 12 (34 aa).

Residues 1-10 constitute a propeptide that is removed on maturation; it reads MSDINATRLP. Residues 11 to 19 constitute a cross-link (cyclopeptide (His-Pro)); that stretch reads HPFPLGLQP. Residues 20–34 constitute a propeptide that is removed on maturation; that stretch reads CAGDVDNLTLTKGEG.

The protein belongs to the MSDIN fungal toxin family. Post-translationally, processed by the macrocyclase-peptidase enzyme POPB to yield a toxic cyclic nonapeptide. POPB first removes 10 residues from the N-terminus. Conformational trapping of the remaining peptide forces the enzyme to release this intermediate rather than proceed to macrocyclization. The enzyme rebinds the remaining peptide in a different conformation and catalyzes macrocyclization of the N-terminal 9 residues.

In terms of biological role, probable toxin that belongs to the MSDIN-like toxin family responsible for a large number of food poisoning cases and deaths. This chain is MSDIN-like toxin proprotein 12, found in Amanita bisporigera (Destroying angel).